The chain runs to 449 residues: Histidinol dehydrogenase (449 aa).

The NAD(+) site is built by tyrosine 136, glutamine 204, and asparagine 232. Substrate contacts are provided by threonine 255, glutamine 277, and histidine 280. 2 residues coordinate Zn(2+): glutamine 277 and histidine 280. Residues glutamate 346 and histidine 347 each act as proton acceptor in the active site. Substrate is bound by residues histidine 347, aspartate 380, glutamate 434, and histidine 439. Aspartate 380 lines the Zn(2+) pocket. Histidine 439 provides a ligand contact to Zn(2+).

Belongs to the histidinol dehydrogenase family. Zn(2+) serves as cofactor.

The catalysed reaction is L-histidinol + 2 NAD(+) + H2O = L-histidine + 2 NADH + 3 H(+). Its pathway is amino-acid biosynthesis; L-histidine biosynthesis; L-histidine from 5-phospho-alpha-D-ribose 1-diphosphate: step 9/9. Catalyzes the sequential NAD-dependent oxidations of L-histidinol to L-histidinaldehyde and then to L-histidine. This Mycobacterium leprae (strain TN) protein is Histidinol dehydrogenase (hisD).